A 168-amino-acid chain; its full sequence is Large ribosomal subunit protein uL10 (168 aa).

This sequence belongs to the universal ribosomal protein uL10 family. As to quaternary structure, part of the ribosomal stalk of the 50S ribosomal subunit. The N-terminus interacts with L11 and the large rRNA to form the base of the stalk. The C-terminus forms an elongated spine to which L12 dimers bind in a sequential fashion forming a multimeric L10(L12)X complex.

Forms part of the ribosomal stalk, playing a central role in the interaction of the ribosome with GTP-bound translation factors. The chain is Large ribosomal subunit protein uL10 from Ralstonia nicotianae (strain ATCC BAA-1114 / GMI1000) (Ralstonia solanacearum).